The chain runs to 140 residues: Nucleoside diphosphate kinase (140 aa).

Residues Lys11, Phe59, Arg87, Thr93, Arg104, and Asn114 each coordinate ATP. His117 serves as the catalytic Pros-phosphohistidine intermediate.

Belongs to the NDK family. Homotetramer. It depends on Mg(2+) as a cofactor.

It localises to the cytoplasm. The catalysed reaction is a 2'-deoxyribonucleoside 5'-diphosphate + ATP = a 2'-deoxyribonucleoside 5'-triphosphate + ADP. The enzyme catalyses a ribonucleoside 5'-diphosphate + ATP = a ribonucleoside 5'-triphosphate + ADP. Major role in the synthesis of nucleoside triphosphates other than ATP. The ATP gamma phosphate is transferred to the NDP beta phosphate via a ping-pong mechanism, using a phosphorylated active-site intermediate. This Francisella tularensis subsp. mediasiatica (strain FSC147) protein is Nucleoside diphosphate kinase.